The following is a 242-amino-acid chain: Zinc import ATP-binding protein ZnuC (242 aa).

Residues 24-241 (INVKDLSFAY…EKFLKMFSSY (218 aa)) form the ABC transporter domain. 56–63 (GPNGGGKT) contributes to the ATP binding site.

It belongs to the ABC transporter superfamily. Zinc importer (TC 3.A.1.15.5) family. The complex is composed of two ATP-binding proteins (ZnuC), two transmembrane proteins (ZnuB) and a solute-binding protein (ZnuA).

It is found in the cell inner membrane. It carries out the reaction Zn(2+)(out) + ATP(in) + H2O(in) = Zn(2+)(in) + ADP(in) + phosphate(in) + H(+)(in). In terms of biological role, part of the ABC transporter complex ZnuABC involved in zinc import. Responsible for energy coupling to the transport system. The protein is Zinc import ATP-binding protein ZnuC of Ehrlichia ruminantium (strain Gardel).